The sequence spans 303 residues: Protein translocase subunit SecF (303 aa).

Transmembrane regions (helical) follow at residues 28 to 48 (SIIL…NFGI), 140 to 160 (IEAG…YIWV), 164 to 184 (WYFG…ALGF), 194 to 214 (LSTI…SVVI), 246 to 266 (ILTV…GGEA), and 272 to 292 (VLVF…SAPI).

It belongs to the SecD/SecF family. SecF subfamily. As to quaternary structure, forms a complex with SecD. Part of the essential Sec protein translocation apparatus which comprises SecA, SecYEG and auxiliary proteins SecDF-YajC and YidC.

It is found in the cell inner membrane. In terms of biological role, part of the Sec protein translocase complex. Interacts with the SecYEG preprotein conducting channel. SecDF uses the proton motive force (PMF) to complete protein translocation after the ATP-dependent function of SecA. This chain is Protein translocase subunit SecF, found in Rickettsia bellii (strain OSU 85-389).